The following is an 81-amino-acid chain: Short neurotoxin 1 (81 aa).

Residues Met1–Thr21 form the signal peptide. 4 disulfide bridges follow: Cys24–Cys43, Cys38–Cys60, Cys62–Cys73, and Cys74–Cys79.

Belongs to the three-finger toxin family. Short-chain subfamily. Type I alpha-neurotoxin sub-subfamily. Expressed by the venom gland.

It is found in the secreted. Binds to muscle nicotinic acetylcholine receptor (nAChR) and inhibit acetylcholine from binding to the receptor, thereby impairing neuromuscular transmission. The polypeptide is Short neurotoxin 1 (Austrelaps superbus (Lowland copperhead snake)).